A 366-amino-acid chain; its full sequence is NADH-quinone oxidoreductase subunit D (366 aa).

This sequence belongs to the complex I 49 kDa subunit family. As to quaternary structure, NDH-1 is composed of 14 different subunits. Subunits NuoB, C, D, E, F, and G constitute the peripheral sector of the complex.

It is found in the cell membrane. The catalysed reaction is a quinone + NADH + 5 H(+)(in) = a quinol + NAD(+) + 4 H(+)(out). In terms of biological role, NDH-1 shuttles electrons from NADH, via FMN and iron-sulfur (Fe-S) centers, to quinones in the respiratory chain. The immediate electron acceptor for the enzyme in this species is believed to be a menaquinone. Couples the redox reaction to proton translocation (for every two electrons transferred, four hydrogen ions are translocated across the cytoplasmic membrane), and thus conserves the redox energy in a proton gradient. This Bacillus anthracis protein is NADH-quinone oxidoreductase subunit D.